Reading from the N-terminus, the 188-residue chain is Nicotinamide/nicotinic acid mononucleotide adenylyltransferase (188 aa).

The protein belongs to the archaeal NMN adenylyltransferase family.

The enzyme catalyses beta-nicotinamide D-ribonucleotide + ATP + H(+) = diphosphate + NAD(+). It carries out the reaction nicotinate beta-D-ribonucleotide + ATP + H(+) = deamido-NAD(+) + diphosphate. Its pathway is cofactor biosynthesis; NAD(+) biosynthesis; NAD(+) from nicotinamide D-ribonucleotide: step 1/1. It functions in the pathway cofactor biosynthesis; NAD(+) biosynthesis; deamido-NAD(+) from nicotinate D-ribonucleotide: step 1/1. Functionally, dual substrate specificity enzyme that catalyzes the formation of NAD(+) from nicotinamide mononucleotide (NMN) and the formation of deamido-NAD(+) (NaAD) from nicotinate mononucleotide (NaMN). Shows nearly identical catalytic efficiency for both physiological substrates. Plays an essential role in all three routes of NAD biogenesis, de novo synthesis as well as the deamidating and nondeamidating salvage pathways. This chain is Nicotinamide/nicotinic acid mononucleotide adenylyltransferase, found in Acinetobacter baylyi (strain ATCC 33305 / BD413 / ADP1).